The chain runs to 495 residues: Aspartyl/glutamyl-tRNA(Asn/Gln) amidotransferase subunit B (495 aa).

It belongs to the GatB/GatE family. GatB subfamily. Heterotrimer of A, B and C subunits.

It catalyses the reaction L-glutamyl-tRNA(Gln) + L-glutamine + ATP + H2O = L-glutaminyl-tRNA(Gln) + L-glutamate + ADP + phosphate + H(+). It carries out the reaction L-aspartyl-tRNA(Asn) + L-glutamine + ATP + H2O = L-asparaginyl-tRNA(Asn) + L-glutamate + ADP + phosphate + 2 H(+). Its function is as follows. Allows the formation of correctly charged Asn-tRNA(Asn) or Gln-tRNA(Gln) through the transamidation of misacylated Asp-tRNA(Asn) or Glu-tRNA(Gln) in organisms which lack either or both of asparaginyl-tRNA or glutaminyl-tRNA synthetases. The reaction takes place in the presence of glutamine and ATP through an activated phospho-Asp-tRNA(Asn) or phospho-Glu-tRNA(Gln). This Rippkaea orientalis (strain PCC 8801 / RF-1) (Cyanothece sp. (strain PCC 8801)) protein is Aspartyl/glutamyl-tRNA(Asn/Gln) amidotransferase subunit B.